The sequence spans 474 residues: Cysteine protease ATG4A (474 aa).

Positions 1-32 are disordered; sequence MTSLPGRGVSPSSSDPLCEGNAAPSSSSSSGQ. Residue Cys-161 is the Nucleophile of the active site. Residues Asp-358 and His-360 contribute to the active site. Polar residues predominate over residues 439 to 449; that stretch reads KQMYNEESSSG. The disordered stretch occupies residues 439–474; sequence KQMYNEESSSGDGMDSINVEGLDGSGETGEEEWQIL.

The protein belongs to the peptidase C54 family. Interacts with ATG8.

It localises to the cytoplasm. The enzyme catalyses [protein]-C-terminal L-amino acid-glycyl-phosphatidylethanolamide + H2O = [protein]-C-terminal L-amino acid-glycine + a 1,2-diacyl-sn-glycero-3-phosphoethanolamine. Cysteine protease that plays a key role in autophagy by mediating both proteolytic activation and delipidation of ATG8 family proteins. The protease activity is required for proteolytic activation of ATG8 family proteins: cleaves the C-terminal amino acid of ATG8 proteins to reveal a C-terminal glycine. Exposure of the glycine at the C-terminus is essential for ATG8 proteins conjugation to phosphatidylethanolamine (PE) and insertion to membranes, which is necessary for autophagy. In addition to the protease activity, also mediates delipidation of PE-conjugated ATG8 proteins. This Oryza sativa subsp. japonica (Rice) protein is Cysteine protease ATG4A (ATG4A).